A 394-amino-acid chain; its full sequence is tRNA-specific 2-thiouridylase MnmA (394 aa).

Residues 13–20 (GLSGGVDS) and M39 each bind ATP. Residues 99-101 (NPD) are interaction with target base in tRNA. Residue C104 is the Nucleophile of the active site. A disulfide bridge connects residues C104 and C202. G128 is an ATP binding site. An interaction with tRNA region spans residues 152 to 154 (KDQ). C202 (cysteine persulfide intermediate) is an active-site residue. The interaction with tRNA stretch occupies residues 329-330 (RY).

The protein belongs to the MnmA/TRMU family.

The protein resides in the cytoplasm. The enzyme catalyses S-sulfanyl-L-cysteinyl-[protein] + uridine(34) in tRNA + AH2 + ATP = 2-thiouridine(34) in tRNA + L-cysteinyl-[protein] + A + AMP + diphosphate + H(+). In terms of biological role, catalyzes the 2-thiolation of uridine at the wobble position (U34) of tRNA, leading to the formation of s(2)U34. The polypeptide is tRNA-specific 2-thiouridylase MnmA (Polaromonas naphthalenivorans (strain CJ2)).